Reading from the N-terminus, the 1166-residue chain is Peroxisomal ATPase PEX6 (1166 aa).

Belongs to the AAA ATPase family. Interacts with PEX1; forming the PEX1-PEX6 AAA ATPase complex, which is composed of a heterohexamer formed by a trimer of PEX1-PEX6 dimers.

The protein resides in the membrane. It catalyses the reaction ATP + H2O = ADP + phosphate + H(+). Its function is as follows. Component of the PEX1-PEX6 AAA ATPase complex involved in peroxisome biosynthesis. The complex acts as a protein dislocase complex that mediates the ATP-dependent extraction of the PEX5 receptor from peroxisomal membranes, an essential step for PEX5 recycling. Specifically recognizes PEX5 monoubiquitinated at 'Cys-6', and pulls it out of the peroxisome lumen through the PEX2-PEX10-PEX12 retrotranslocation channel. Extraction by the PEX1-PEX6 AAA ATPase complex is accompanied by unfolding of the TPR repeats and release of bound cargo from PEX5. The protein is Peroxisomal ATPase PEX6 of Komagataella phaffii (strain GS115 / ATCC 20864) (Yeast).